We begin with the raw amino-acid sequence, 1893 residues long: Serine-aspartate repeat-containing protein I (1893 aa).

A signal peptide spans 1 to 54 (MNFKGVKLLKNSKKRLDFLPNTLNKYSIRKFTVGTASILVGATLFLGVSNEAEA). Residues 53–333 (EAAEKIDSPT…AHGINNKNKQ (281 aa)) form a disordered region. Residues 54-222 (AAEKIDSPTK…AEEPATKEEA (169 aa)) are compositionally biased toward basic and acidic residues. 21 tandem repeats follow at residues 72 to 83 (AATKEEAATTEE), 84 to 95 (PATKEEAATTEE), 96 to 107 (PATKEEAAIAEE), 108 to 119 (PATKEEAATTEE), 120 to 131 (PATKEEAAIAEE), 132 to 143 (PATKEEAATTEE), 144 to 155 (PATKEEAATTEE), 156 to 167 (PATKEEAAIAEE), 168 to 179 (PATKEEAATTEE), 180 to 191 (PATKEEAAIAEE), 192 to 203 (PATKEEAVTSEE), 204 to 215 (AATKEKAAIAEE), 216 to 227 (PATKEEAAIAEE), 228 to 239 (PETKEEAATTEE), 240 to 251 (PATKEEAAIAEE), 252 to 263 (AATKEKAVTSEE), 264 to 275 (AATKEKAAIAEE), 276 to 287 (AATKEKAAIAEE), 288 to 299 (PETKEEAATTEE), 300 to 311 (PETKEEAAIAEE), and 312 to 323 (PATKEKAVTSEE). Positions 72 to 323 (AATKEEAATT…TKEKAVTSEE (252 aa)) are 21 X 12 AA tandem repeat of [AP]-[AE]-T-K-E-[EK]-A-[AV]-[IT]-[AST]-E-E. Basic and acidic residues predominate over residues 240–284 (PATKEEAAIAEEAATKEKAVTSEEAATKEKAAIAEEAATKEKAAI). The span at 286–302 (EEPETKEEAATTEEPET) shows a compositional bias: acidic residues. Over residues 312–325 (PATKEKAVTSEEAH) the composition is skewed to basic and acidic residues. The ligand binding A region stretch occupies residues 324-755 (AHGINNKNKQ…GSSTAQGDNP (432 aa)). 2 consecutive CNA-B domains span residues 756–874 (TYNL…YETP) and 875–984 (KYSL…YFDE). The segment at 941–1867 (KPEGLTQTTT…GNNTQNNGTL (927 aa)) is disordered. The span at 955–975 (DENKDADGEEVHVTITDHDDF) shows a compositional bias: basic and acidic residues. Residues 981–1836 (YFDEDSDADA…DSDADADADS (856 aa)) show a composition bias toward acidic residues. Over residues 1837 to 1851 (DADKYHNDTADKSND) the composition is skewed to basic and acidic residues. The LPXTG sorting signal signature appears at 1854–1858 (LPDTG). Residue Thr1857 is modified to Pentaglycyl murein peptidoglycan amidated threonine. A propeptide spans 1858–1893 (GNNTQNNGTLFGSLFAALGGLFLVGSRRKNKNNEEK) (removed by sortase).

The protein belongs to the serine-aspartate repeat-containing protein (SDr) family.

The protein localises to the secreted. It localises to the cell wall. Responsible for collagen binding by S.saprophyticus. This chain is Serine-aspartate repeat-containing protein I (sdrI), found in Staphylococcus saprophyticus.